The chain runs to 968 residues: MDATLTAREIRERFINFFRRNEHTYVHSSATIPLDDPTLLFANAGMNQFKPIFLNTIDPSHPMAKLSRAANTQKCIRAGGKHNDLDDVGKDVYHHTFFEMLGSWSFGDYFKELACKMALELLTQEFGIPVERLYVTYFGGDEAAGLEPDLECRQIWQNLGLDEARILPGNMKDNFWEMGDTGPCGPCSEIHYDRIGGRDAAHLVNQDDPNVLEIWNLVFIQYNRESDGVLKPLPKKSIDTGMGLERLVSVLQNKMSNYDTDLFMPYFEAIQKGTGARPYTGKVGAEDADGIDMAYRVLADHARTITVALADGGRPDNTGRGYVLRRILRRAVRYSHEKLNASRGFFATLVDVVVQSLGDAFPELKKDPEMVKDIINEEEVQFLKTLSRGRRILDRKIQSLGDCKTIPGDTAWLLYDTYGFPVDLTGLIAEEKGLVVDMNGFEEERRLAQLKSQGKGAGDEDLIMLDIYAIEELRAKGLEATDDSPKYNYQSDSSGSYVFECTVATVLALRREKMFVDEVVTGQECGVVLDKTCFYAEQGGQIYDEGYLVKVDDSSEDKTEFTVKNAQVRGGYVLHIGTIYGNLKVGDQVRLFIDEPRRRPVMSNHTATHILNFALRSVLGEADQKGSLVAPDRLRFDFTAKGAMSTQQIKKAEEIVNGMIEAAKPVYTQDCPLAAAKAIQGLRAVFDETYPDPVRVVSIGVPVSELLDDPCGPAGSLTSVEFCGGTHLRNSSHAGAFVIVTEEAIAKGIRRIVAVTGAEAQKALRKSETLKKSLSAMEAKVKAQTAPNKDVQREIADLGEALATAVIPQWQKDEQRETLKSLKKVMDDLDRASKADVQKRVLEKTKQLIDSNPNQPLVILEMESGASAKALNEALKLFKTHSPQTSAMLFTVDNEAGKITCLCQVPQNAANRGLKASEWVQQVSGLMDGKGGGKDMSAQATGKNVGCLQEALQLATSFAQLRLGDVKN.

The residue at position 1 (M1) is an N-acetylmethionine. ATP is bound by residues R77, H95, W176, and I214–N216. Positions 216 and 239 each coordinate L-alanine. G243 is an ATP binding site. Phosphoserine occurs at positions 399 and 555. Residues H605, H609, C723, and H727 each contribute to the Zn(2+) site. The Nuclear localization signal motif lies at R750 to A763. Position 876 is an N6-acetyllysine (K876). K943 is modified (N6,N6,N6-trimethyllysine; alternate). The residue at position 943 (K943) is an N6,N6-dimethyllysine; alternate. At K943 the chain carries N6-methyllysine; alternate.

Belongs to the class-II aminoacyl-tRNA synthetase family. As to quaternary structure, monomer. Interacts with ANKRD16; the interaction is direct. Zn(2+) is required as a cofactor. ISGylated. Post-translationally, methylation at 'Lys-943' by METTL21C.

The protein localises to the cytoplasm. Its subcellular location is the nucleus. It carries out the reaction tRNA(Ala) + L-alanine + ATP = L-alanyl-tRNA(Ala) + AMP + diphosphate. The enzyme catalyses (S)-lactate + ATP + H(+) = (S)-lactoyl-AMP + diphosphate. It catalyses the reaction (S)-lactoyl-AMP + L-lysyl-[protein] = N(6)-[(S)-lactoyl]-L-lysyl-[protein] + AMP + 2 H(+). Its activity is regulated as follows. The protein lactyltransferase activity is inhibited by beta-alanine. In terms of biological role, catalyzes the attachment of alanine to tRNA(Ala) in a two-step reaction: alanine is first activated by ATP to form Ala-AMP and then transferred to the acceptor end of tRNA(Ala). Also edits incorrectly charged tRNA(Ala) via its editing domain. In presence of high levels of lactate, also acts as a protein lactyltransferase that mediates lactylation of lysine residues in target proteins, such as TEAD1, TP53/p53 and YAP1. Protein lactylation takes place in a two-step reaction: lactate is first activated by ATP to form lactate-AMP and then transferred to lysine residues of target proteins. Acts as an inhibitor of TP53/p53 activity by catalyzing lactylation of TP53/p53. Acts as a positive regulator of the Hippo pathway by mediating lactylation of TEAD1 and YAP1. The sequence is that of Alanine--tRNA ligase, cytoplasmic from Mus musculus (Mouse).